The following is a 734-amino-acid chain: Photosystem I P700 chlorophyll a apoprotein A2 (734 aa).

8 helical membrane passes run 46–69 (IFASHFGQLAIIFLWTSGNLFHVA), 135–158 (LYTGALFLLVGAAILLFAGWLHLQ), 175–199 (LNHHLAGLFGVSSLAWTGHLVHVAI), 273–291 (MAHHHLAIAVVFILAGHMY), 330–353 (LHFQLGLALASLGVITSLVAQHMY), 369–395 (SALYTHHQYIAGFIMTGAFAHGAIFFI), 417–439 (ALISHLSWVTLFLGFHTLGLYVH), and 517–535 (FLVHHAIALGLHTTTLILV). [4Fe-4S] cluster-binding residues include Cys559 and Cys568. The next 2 membrane-spanning stretches (helical) occupy residues 575–596 (AFYLAVFWMLNTIGWTTFYWHW) and 643–665 (LSVWAWMFLFGHLVWATGFMFLI). Chlorophyll a is bound by residues His654, Met662, and Tyr670. Trp671 provides a ligand contact to phylloquinone. Residues 707–727 (LVGLAHFSVGYVFTYAAFVIA) traverse the membrane as a helical segment.

This sequence belongs to the PsaA/PsaB family. The PsaA/B heterodimer binds the P700 chlorophyll special pair and subsequent electron acceptors. PSI consists of a core antenna complex that captures photons, and an electron transfer chain that converts photonic excitation into a charge separation. The eukaryotic PSI reaction center is composed of at least 11 subunits. P700 is a chlorophyll a/chlorophyll a' dimer, A0 is one or more chlorophyll a, A1 is one or both phylloquinones and FX is a shared 4Fe-4S iron-sulfur center. serves as cofactor.

The protein resides in the plastid. Its subcellular location is the chloroplast thylakoid membrane. It catalyses the reaction reduced [plastocyanin] + hnu + oxidized [2Fe-2S]-[ferredoxin] = oxidized [plastocyanin] + reduced [2Fe-2S]-[ferredoxin]. Its function is as follows. PsaA and PsaB bind P700, the primary electron donor of photosystem I (PSI), as well as the electron acceptors A0, A1 and FX. PSI is a plastocyanin/cytochrome c6-ferredoxin oxidoreductase, converting photonic excitation into a charge separation, which transfers an electron from the donor P700 chlorophyll pair to the spectroscopically characterized acceptors A0, A1, FX, FA and FB in turn. Oxidized P700 is reduced on the lumenal side of the thylakoid membrane by plastocyanin or cytochrome c6. This Nephroselmis olivacea (Green alga) protein is Photosystem I P700 chlorophyll a apoprotein A2.